The following is a 616-amino-acid chain: ATP-dependent RNA helicase VAD1 (616 aa).

The disordered stretch occupies residues 1 to 35; sequence MASSSTLANDDWKQGLAAPPKDLRPQTEDVTATQG. The Q motif motif lies at 36-64; that stretch reads SRFEDFGLRRELLMGIYTAGFERPSPIQE. The Helicase ATP-binding domain maps to 67 to 238; that stretch reads IPMALTGRDI…DQHMVQPYEI (172 aa). An ATP-binding site is contributed by 80-87; sequence AKNGTGKT. A DEAD box motif is present at residues 186–189; it reads DEAD. The Helicase C-terminal domain occupies 248 to 408; sequence GVTQYYAYVE…PIPAVIDPVL (161 aa). The segment at 416–616 is disordered; it reads EEERESPPPK…GASQSQQAQA (201 aa). Low complexity-rich tracts occupy residues 427-441, 458-500, and 508-523; these read AAIA…PQQR, PAAA…NSSP, and YPQQ…AQMQ. The span at 529–545 shows a compositional bias: polar residues; sequence PATQPQASAQIPVQGQT. Low complexity-rich tracts occupy residues 550–579 and 606–616; these read PRAQ…PNTG and AGASQSQQAQA.

The protein belongs to the DEAD box helicase family. DDX6/DHH1 subfamily.

It localises to the cytoplasm. It is found in the P-body. The enzyme catalyses ATP + H2O = ADP + phosphate + H(+). ATP-dependent RNA helicase involved in mRNA turnover, and more specifically in mRNA decapping. Is involved in G1/S DNA-damage checkpoint recovery, probably through the regulation of the translational status of a subset of mRNAs. May also have a role in translation and mRNA nuclear export. Blocks autophagy in nutrient-rich conditions by, at least partly, binding and repressing the expression of a set of ATG genes, including ATG3, ATG7, ATG8, ATG19, ATG20 and ATG22. VAD1-mediated repression of autophagy is regulated by TOR-dependent phosphorylation of the decapping enzyme DCP2. Regulates multiple virulence-associated genes. Repression of autophagy by VAD1 also regulates the pathogenesis. In Cryptococcus neoformans var. grubii serotype A (strain H99 / ATCC 208821 / CBS 10515 / FGSC 9487) (Filobasidiella neoformans var. grubii), this protein is ATP-dependent RNA helicase VAD1.